The sequence spans 112 residues: Large ribosomal subunit protein uL22 (112 aa).

Belongs to the universal ribosomal protein uL22 family. As to quaternary structure, part of the 50S ribosomal subunit.

This protein binds specifically to 23S rRNA; its binding is stimulated by other ribosomal proteins, e.g. L4, L17, and L20. It is important during the early stages of 50S assembly. It makes multiple contacts with different domains of the 23S rRNA in the assembled 50S subunit and ribosome. Its function is as follows. The globular domain of the protein is located near the polypeptide exit tunnel on the outside of the subunit, while an extended beta-hairpin is found that lines the wall of the exit tunnel in the center of the 70S ribosome. The sequence is that of Large ribosomal subunit protein uL22 from Mesoplasma florum (strain ATCC 33453 / NBRC 100688 / NCTC 11704 / L1) (Acholeplasma florum).